The sequence spans 131 residues: Antileukoproteinase (131 aa).

An N-terminal signal peptide occupies residues 1–25 (MKSCGLLPFTVLLALGILAPWTVEG). 2 consecutive WAP domains span residues 29–77 (DAIK…VNPV) and 83–131 (VWRK…LPPM). 8 disulfides stabilise this stretch: Cys-36-Cys-65, Cys-44-Cys-69, Cys-52-Cys-64, Cys-58-Cys-73, Cys-90-Cys-119, Cys-97-Cys-123, Cys-106-Cys-118, and Cys-112-Cys-127. The tract at residues 85-131 (RKPGRCVKTQARCMMLNPPNVCQRDGQCDGKYKCCEGICGKVCLPPM) is elastase inhibitory domain.

Interacts with GRN; interaction protects progranulin from proteolysis. In terms of tissue distribution, detected in bronchial epithelial cells. Detected in bronchoalveolar fluid after infection with M.tuberculosis (at protein level). Highest expression in lung, spleen, intestine and epididymis with lower levels in liver and seminal vesicle. No expression in brain, heart, kidney and muscle.

It localises to the secreted. Functionally, acid-stable proteinase inhibitor with strong affinities for trypsin, chymotrypsin, elastase, and cathepsin G. Modulates the innate immune response after bacterial infection. Contributes to regulate the inflammatory and immune responses to the intracellular parasite L.major. Down-regulates responses to bacterial lipopolysaccharide (LPS). Plays a role in regulating the activation of NF-kappa-B and inflammatory responses. Has antimicrobial activity against mycobacteria, but not against salmonella. Contributes to normal resistance against infection by M.tuberculosis. Required for normal resistance to L.major. Required for normal wound healing, probably by preventing tissue damage by limiting protease activity. Together with ELANE, required for normal differentiation and proliferation of bone marrow myeloid cells. The protein is Antileukoproteinase (Slpi) of Mus musculus (Mouse).